An 878-amino-acid chain; its full sequence is Alanine--tRNA ligase (878 aa).

His566, His570, Cys668, and His672 together coordinate Zn(2+).

This sequence belongs to the class-II aminoacyl-tRNA synthetase family. Zn(2+) serves as cofactor.

Its subcellular location is the cytoplasm. It carries out the reaction tRNA(Ala) + L-alanine + ATP = L-alanyl-tRNA(Ala) + AMP + diphosphate. Its function is as follows. Catalyzes the attachment of alanine to tRNA(Ala) in a two-step reaction: alanine is first activated by ATP to form Ala-AMP and then transferred to the acceptor end of tRNA(Ala). Also edits incorrectly charged Ser-tRNA(Ala) and Gly-tRNA(Ala) via its editing domain. This is Alanine--tRNA ligase from Geobacillus thermodenitrificans (strain NG80-2).